A 242-amino-acid chain; its full sequence is Aspartate/glutamate leucyltransferase (242 aa).

The protein belongs to the R-transferase family. Bpt subfamily.

It localises to the cytoplasm. The catalysed reaction is N-terminal L-glutamyl-[protein] + L-leucyl-tRNA(Leu) = N-terminal L-leucyl-L-glutamyl-[protein] + tRNA(Leu) + H(+). It catalyses the reaction N-terminal L-aspartyl-[protein] + L-leucyl-tRNA(Leu) = N-terminal L-leucyl-L-aspartyl-[protein] + tRNA(Leu) + H(+). Functions in the N-end rule pathway of protein degradation where it conjugates Leu from its aminoacyl-tRNA to the N-termini of proteins containing an N-terminal aspartate or glutamate. This chain is Aspartate/glutamate leucyltransferase, found in Alcanivorax borkumensis (strain ATCC 700651 / DSM 11573 / NCIMB 13689 / SK2).